Consider the following 389-residue polypeptide: Cellobiose 2-epimerase (389 aa).

The protein belongs to the cellobiose 2-epimerase family.

The catalysed reaction is D-cellobiose = beta-D-glucosyl-(1-&gt;4)-D-mannopyranose. Functionally, catalyzes the reversible epimerization of cellobiose to 4-O-beta-D-glucopyranosyl-D-mannose (Glc-Man). In Ruminococcus albus (strain ATCC 27210 / DSM 20455 / JCM 14654 / NCDO 2250 / 7), this protein is Cellobiose 2-epimerase.